Here is a 153-residue protein sequence, read N- to C-terminus: Large ribosomal subunit protein uL30 (153 aa).

Belongs to the universal ribosomal protein uL30 family. Part of the 50S ribosomal subunit.

The polypeptide is Large ribosomal subunit protein uL30 (Methanospirillum hungatei JF-1 (strain ATCC 27890 / DSM 864 / NBRC 100397 / JF-1)).